The primary structure comprises 243 residues: Adenosylcobinamide-GDP ribazoletransferase (243 aa).

5 consecutive transmembrane segments (helical) span residues Leu31 to Leu51, Ala61 to Ala81, Ile109 to Leu129, Gly134 to Thr154, and Leu188 to Leu208.

The protein belongs to the CobS family. Mg(2+) serves as cofactor.

The protein localises to the cell inner membrane. It catalyses the reaction alpha-ribazole + adenosylcob(III)inamide-GDP = adenosylcob(III)alamin + GMP + H(+). The enzyme catalyses alpha-ribazole 5'-phosphate + adenosylcob(III)inamide-GDP = adenosylcob(III)alamin 5'-phosphate + GMP + H(+). It functions in the pathway cofactor biosynthesis; adenosylcobalamin biosynthesis; adenosylcobalamin from cob(II)yrinate a,c-diamide: step 7/7. Its function is as follows. Joins adenosylcobinamide-GDP and alpha-ribazole to generate adenosylcobalamin (Ado-cobalamin). Also synthesizes adenosylcobalamin 5'-phosphate from adenosylcobinamide-GDP and alpha-ribazole 5'-phosphate. This is Adenosylcobinamide-GDP ribazoletransferase from Ectopseudomonas mendocina (strain ymp) (Pseudomonas mendocina).